A 278-amino-acid chain; its full sequence is Adenosylcobinamide-GDP ribazoletransferase (278 aa).

Helical transmembrane passes span 44–64 (GIGV…QLLL), 69–89 (FTPL…TGGF), 121–141 (AFGA…LALL), 161–181 (VCAA…VMIW), 204–224 (GGLA…SLAL), and 227–247 (INLI…LRFF).

It belongs to the CobS family. The cofactor is Mg(2+).

The protein resides in the cell inner membrane. It carries out the reaction alpha-ribazole + adenosylcob(III)inamide-GDP = adenosylcob(III)alamin + GMP + H(+). It catalyses the reaction alpha-ribazole 5'-phosphate + adenosylcob(III)inamide-GDP = adenosylcob(III)alamin 5'-phosphate + GMP + H(+). It functions in the pathway cofactor biosynthesis; adenosylcobalamin biosynthesis; adenosylcobalamin from cob(II)yrinate a,c-diamide: step 7/7. Its function is as follows. Joins adenosylcobinamide-GDP and alpha-ribazole to generate adenosylcobalamin (Ado-cobalamin). Also synthesizes adenosylcobalamin 5'-phosphate from adenosylcobinamide-GDP and alpha-ribazole 5'-phosphate. This Polaromonas naphthalenivorans (strain CJ2) protein is Adenosylcobinamide-GDP ribazoletransferase.